A 182-amino-acid polypeptide reads, in one-letter code: UPF0397 protein YdcD (182 aa).

A run of 5 helical transmembrane segments spans residues isoleucine 8–isoleucine 28, alanine 42–isoleucine 62, alanine 74–valine 94, isoleucine 114–leucine 134, and glutamine 146–leucine 166.

Belongs to the UPF0397 family.

The protein resides in the cell membrane. In Lactococcus lactis subsp. lactis (strain IL1403) (Streptococcus lactis), this protein is UPF0397 protein YdcD (ydcD).